Here is a 500-residue protein sequence, read N- to C-terminus: Trehalose-6-phosphate synthase (500 aa).

Arg-28 is a D-glucose 6-phosphate binding site. 48 to 49 (GG) serves as a coordination point for UDP-alpha-D-glucose. Tyr-104 and Asp-158 together coordinate D-glucose 6-phosphate. UDP-alpha-D-glucose is bound by residues Arg-300 and Lys-305. Arg-338 lines the D-glucose 6-phosphate pocket. Residue 403-407 (LVAKE) participates in UDP-alpha-D-glucose binding.

The protein belongs to the glycosyltransferase 20 family. Homotetramer.

It catalyses the reaction ADP-alpha-D-glucose + D-glucose 6-phosphate = alpha,alpha-trehalose 6-phosphate + ADP + H(+). The enzyme catalyses CDP-alpha-D-glucose + D-glucose 6-phosphate = alpha,alpha-trehalose 6-phosphate + CDP + H(+). The catalysed reaction is GDP-alpha-D-glucose + D-glucose 6-phosphate = alpha,alpha-trehalose 6-phosphate + GDP + H(+). It carries out the reaction TDP-alpha-D-glucose + D-glucose 6-phosphate = 5-methyl-UDP + alpha,alpha-trehalose 6-phosphate + H(+). It catalyses the reaction D-glucose 6-phosphate + UDP-alpha-D-glucose = alpha,alpha-trehalose 6-phosphate + UDP + H(+). Its pathway is glycan biosynthesis; trehalose biosynthesis. Probably involved in the osmoprotection via the biosynthesis of trehalose and in the production of glycogen and alpha-glucan via the TreS-Pep2 branch involved in the biosynthesis of maltose-1-phosphate (M1P). Catalyzes the transfer of glucose from UDP-glucose (UDP-Glc) to D-glucose 6-phosphate (Glc-6-P) to form trehalose-6-phosphate. Probably also able to use ADP-Glc, CDP-Glc, GDP-Glc and TDP-Glc as glucosyl donors. This Mycobacterium ulcerans (strain Agy99) protein is Trehalose-6-phosphate synthase.